Reading from the N-terminus, the 212-residue chain is Ribonuclease HII (212 aa).

Positions 1–204 (MRVGIDEAGR…LRSTAPLYYI (204 aa)) constitute an RNase H type-2 domain. Positions 6, 7, and 103 each coordinate a divalent metal cation.

The protein belongs to the RNase HII family. The cofactor is Mn(2+). Mg(2+) serves as cofactor.

The protein resides in the cytoplasm. The catalysed reaction is Endonucleolytic cleavage to 5'-phosphomonoester.. Functionally, endonuclease that specifically degrades the RNA of RNA-DNA hybrids. The sequence is that of Ribonuclease HII from Saccharolobus solfataricus (strain ATCC 35092 / DSM 1617 / JCM 11322 / P2) (Sulfolobus solfataricus).